Reading from the N-terminus, the 156-residue chain is Small ribosomal subunit protein uS7 (156 aa).

This sequence belongs to the universal ribosomal protein uS7 family. In terms of assembly, part of the 30S ribosomal subunit. Contacts proteins S9 and S11.

Functionally, one of the primary rRNA binding proteins, it binds directly to 16S rRNA where it nucleates assembly of the head domain of the 30S subunit. Is located at the subunit interface close to the decoding center, probably blocks exit of the E-site tRNA. This chain is Small ribosomal subunit protein uS7, found in Bartonella henselae (strain ATCC 49882 / DSM 28221 / CCUG 30454 / Houston 1) (Rochalimaea henselae).